Consider the following 310-residue polypeptide: tRNA uridine(34) hydroxylase (310 aa).

The 99-residue stretch at Lys-127–Asn-225 folds into the Rhodanese domain. The active-site Cysteine persulfide intermediate is the Cys-185.

This sequence belongs to the TrhO family.

The catalysed reaction is uridine(34) in tRNA + AH2 + O2 = 5-hydroxyuridine(34) in tRNA + A + H2O. Catalyzes oxygen-dependent 5-hydroxyuridine (ho5U) modification at position 34 in tRNAs. In Prochlorococcus marinus (strain MIT 9312), this protein is tRNA uridine(34) hydroxylase.